A 473-amino-acid chain; its full sequence is Photosystem II CP43 reaction center protein (473 aa).

Residues 1–14 (MKTLYSLRRFYPVE) constitute a propeptide that is removed on maturation. N-acetylthreonine is present on Thr15. Residue Thr15 is modified to Phosphothreonine. A run of 5 helical transmembrane segments spans residues 69–93 (LFEV…PHLA), 134–155 (LLGP…KDRN), 178–200 (KALY…RKIT), 255–275 (KPFA…LSYS), and 291–312 (WFNN…ASQA). Glu367 contacts [CaMn4O5] cluster. The helical transmembrane segment at 447-471 (RARAAAAGFEKGIDRDFEPVLSMTP) threads the bilayer.

The protein belongs to the PsbB/PsbC family. PsbC subfamily. In terms of assembly, PSII is composed of 1 copy each of membrane proteins PsbA, PsbB, PsbC, PsbD, PsbE, PsbF, PsbH, PsbI, PsbJ, PsbK, PsbL, PsbM, PsbT, PsbX, PsbY, PsbZ, Psb30/Ycf12, at least 3 peripheral proteins of the oxygen-evolving complex and a large number of cofactors. It forms dimeric complexes. Requires Binds multiple chlorophylls and provides some of the ligands for the Ca-4Mn-5O cluster of the oxygen-evolving complex. It may also provide a ligand for a Cl- that is required for oxygen evolution. PSII binds additional chlorophylls, carotenoids and specific lipids. as cofactor.

It is found in the plastid. The protein resides in the chloroplast thylakoid membrane. Functionally, one of the components of the core complex of photosystem II (PSII). It binds chlorophyll and helps catalyze the primary light-induced photochemical processes of PSII. PSII is a light-driven water:plastoquinone oxidoreductase, using light energy to abstract electrons from H(2)O, generating O(2) and a proton gradient subsequently used for ATP formation. The chain is Photosystem II CP43 reaction center protein from Populus trichocarpa (Western balsam poplar).